Reading from the N-terminus, the 759-residue chain is Inhibitor of nuclear factor kappa-B kinase subunit alpha (759 aa).

Residues 1-20 (MERGAERGPPPAPGGVALRG) form a disordered region. In terms of domain architecture, Protein kinase spans 29–316 (WEMRDRLGTG…PETNSPKCFL (288 aa)). ATP-binding positions include 35 to 43 (LGTGGFGNV) and K58. Catalysis depends on D158, which acts as the Proton acceptor. The interval 469–490 (LLRYNANLIKMKNNMVSASQQL) is leucine-zipper. Residues 691–703 (TPAATWVPQSSSE) show a composition bias toward polar residues. The tract at residues 691-715 (TPAATWVPQSSSEYAPHPLSSMATP) is disordered. Residues 753–758 (FDWSWL) are NEMO-binding.

It belongs to the protein kinase superfamily. Ser/Thr protein kinase family. I-kappa-B kinase subfamily.

It is found in the cytoplasm. The protein localises to the nucleus. The enzyme catalyses L-seryl-[I-kappa-B protein] + ATP = O-phospho-L-seryl-[I-kappa-B protein] + ADP + H(+). Activated when phosphorylated and inactivated when dephosphorylated. Its function is as follows. Phosphorylates inhibitors of NF-kappa-B thus leading to the dissociation of the inhibitor/NF-kappa-B complex and ultimately the degradation of the inhibitor. Phosphorylates 'Ser-10' of histone H3 at NF-kappa-B-regulated promoters during inflammatory responses triggered by cytokines. In Gallus gallus (Chicken), this protein is Inhibitor of nuclear factor kappa-B kinase subunit alpha (CHUK).